The following is an 841-amino-acid chain: Translation initiation factor IF-2 (841 aa).

Composition is skewed to basic and acidic residues over residues 1-12 (MSDNEIKNEAPK), 50-92 (EAAL…EATK), 114-170 (EQPK…REEA), 188-202 (READRDNDRRSEANR), and 213-235 (KKGDREDKNERNADRRNQKDVKG). Disordered stretches follow at residues 1–24 (MSDNEIKNEAPKKLSLQRRTKTTV) and 50–246 (EAAL…GSAL). A tr-type G domain is found at 340 to 510 (TRAPVVTIMG…LLQSEVLELT (171 aa)). The G1 stretch occupies residues 349–356 (GHVDHGKT). 349–356 (GHVDHGKT) is a GTP binding site. The segment at 374–378 (GITQH) is G2. The segment at 396–399 (DTPG) is G3. GTP-binding positions include 396-400 (DTPGH) and 450-453 (NKID). The tract at residues 450-453 (NKID) is G4. Positions 486–488 (SAK) are G5.

This sequence belongs to the TRAFAC class translation factor GTPase superfamily. Classic translation factor GTPase family. IF-2 subfamily.

The protein localises to the cytoplasm. Functionally, one of the essential components for the initiation of protein synthesis. Protects formylmethionyl-tRNA from spontaneous hydrolysis and promotes its binding to the 30S ribosomal subunits. Also involved in the hydrolysis of GTP during the formation of the 70S ribosomal complex. This chain is Translation initiation factor IF-2, found in Actinobacillus pleuropneumoniae serotype 3 (strain JL03).